The sequence spans 562 residues: Phosphomethylpyrimidine synthase (562 aa).

Substrate is bound by residues Asn179, Met208, Tyr237, His273, 293–295, 334–337, and Glu373; these read SRG and DGLR. Residue His377 coordinates Zn(2+). Position 400 (Tyr400) interacts with substrate. Zn(2+) is bound at residue His441. Cys521, Cys524, and Cys529 together coordinate [4Fe-4S] cluster.

The protein belongs to the ThiC family. Requires [4Fe-4S] cluster as cofactor.

It catalyses the reaction 5-amino-1-(5-phospho-beta-D-ribosyl)imidazole + S-adenosyl-L-methionine = 4-amino-2-methyl-5-(phosphooxymethyl)pyrimidine + CO + 5'-deoxyadenosine + formate + L-methionine + 3 H(+). Its pathway is cofactor biosynthesis; thiamine diphosphate biosynthesis. Its function is as follows. Catalyzes the synthesis of the hydroxymethylpyrimidine phosphate (HMP-P) moiety of thiamine from aminoimidazole ribotide (AIR) in a radical S-adenosyl-L-methionine (SAM)-dependent reaction. This Geobacillus kaustophilus (strain HTA426) protein is Phosphomethylpyrimidine synthase.